The chain runs to 286 residues: GTP-binding protein 8 (286 aa).

Residues 105-278 form the EngB-type G domain; that stretch reads KQPEVCFMGR…RCFIAHVTGK (174 aa). GTP contacts are provided by residues 113–120, 142–146, 160–163, 222–225, and 257–259; these read GRSNVGKS, GHTKK, DMPG, TKID, and VSS. Residues S120 and T144 each contribute to the Mg(2+) site.

Belongs to the TRAFAC class TrmE-Era-EngA-EngB-Septin-like GTPase superfamily. EngB GTPase family. It depends on Mg(2+) as a cofactor.

The polypeptide is GTP-binding protein 8 (gtpbp8) (Danio rerio (Zebrafish)).